We begin with the raw amino-acid sequence, 475 residues long: MTEQFESTSFPSDIPAVNEESKLSAEETFKSLSEILAENSTLPVGISSIRVTGAHHTRPSFIRKVLKTCLDTSKPAKSRSLLETLNAIQETTGNLMAFNVYETANIKIDRASSSVSGDDDLDVTIQVKEKPRLYVETGTDVGNVEGNVHANVLARNVFGGAELLSGNVSYGTRNRSTMSVNFETPVNADPKTRLRFNGHSNLRDNKSISSHDLLTKGITLSLQHQDLWSGEHLLSQNLLWRQVTHLTEYASPSVRLEAGDSLKQSLSYTYTRDTRDHLMIPTKGDYVRQTLELAGFGFLPGDASFLKSEFWGQKAVALNSSRSVSLSLSARIGALHSLNKKQVSLCDRFMLGGSTSLRGFSEDRIGPKDGRDSLGGTAYMAFSMSLLFPLPKVDASKPFRLQLFANAGGLSNLTSPNPCGTYKSILSKPCISTGLGLVYATPAARFELNFTLPIATTEKDIGRKGLQFGAGIDFM.

A POTRA domain is found at 44–130 (VGISSIRVTG…LDVTIQVKEK (87 aa)).

Belongs to the SAM50/omp85 family. In terms of assembly, associates with the mitochondrial contact site and cristae organizing system (MICOS) complex (also known as MINOS or MitOS complex).

It localises to the mitochondrion outer membrane. May be required for the assembly pathway of mitochondrial outer membrane proteins. This chain is SAM50-like protein SPAC17C9.06, found in Schizosaccharomyces pombe (strain 972 / ATCC 24843) (Fission yeast).